A 55-amino-acid chain; its full sequence is UPF0291 protein CA_C2726 (55 aa).

Belongs to the UPF0291 family.

Its subcellular location is the cytoplasm. The sequence is that of UPF0291 protein CA_C2726 from Clostridium acetobutylicum (strain ATCC 824 / DSM 792 / JCM 1419 / IAM 19013 / LMG 5710 / NBRC 13948 / NRRL B-527 / VKM B-1787 / 2291 / W).